The chain runs to 261 residues: Flap endonuclease Xni (261 aa).

Asp-105 contacts Mg(2+). Positions 164-256 constitute a 5'-3' exonuclease domain; it reads SQFLDLMALA…DFRVNSPTKA (93 aa). Residues Leu-172, Ala-173, Pro-181, Ile-183, and Ile-186 each contribute to the K(+) site. Residues 185 to 190 form an interaction with DNA region; sequence GIGPKS.

This sequence belongs to the Xni family. Requires Mg(2+) as cofactor. K(+) serves as cofactor.

Functionally, has flap endonuclease activity. During DNA replication, flap endonucleases cleave the 5'-overhanging flap structure that is generated by displacement synthesis when DNA polymerase encounters the 5'-end of a downstream Okazaki fragment. This chain is Flap endonuclease Xni, found in Shewanella oneidensis (strain ATCC 700550 / JCM 31522 / CIP 106686 / LMG 19005 / NCIMB 14063 / MR-1).